A 100-amino-acid chain; its full sequence is Urease subunit gamma (100 aa).

It belongs to the urease gamma subunit family. In terms of assembly, heterotrimer of UreA (gamma), UreB (beta) and UreC (alpha) subunits. Three heterotrimers associate to form the active enzyme.

Its subcellular location is the cytoplasm. It catalyses the reaction urea + 2 H2O + H(+) = hydrogencarbonate + 2 NH4(+). Its pathway is nitrogen metabolism; urea degradation; CO(2) and NH(3) from urea (urease route): step 1/1. The polypeptide is Urease subunit gamma (Cupriavidus taiwanensis (strain DSM 17343 / BCRC 17206 / CCUG 44338 / CIP 107171 / LMG 19424 / R1) (Ralstonia taiwanensis (strain LMG 19424))).